Here is a 283-residue protein sequence, read N- to C-terminus: MIDKKILQMHFSRNAKNYDAYAKVQKKMANTLLDMLDLDSKSRLDILDVGCGTGYLTKLLLDRWPDARITAIDIAPGMIEYARDRFNESNVEFACLDIEEAELNQKYDLVISNATFQWFNDLGGTVNKLVQSLKSDGVLAFSTFGHMTFSELHFSYETARRKLKIDEEFPPGQKFCNAKEILKICCETFEGLEGFEFDTVKKESLEYEYFYTVREFLDSVKKIGANNSNKQRKVNTALTKEMIRIYEEMFKVNGLVRATYHCIFITSRKKLAANTRRLVNAVV.

It belongs to the methyltransferase superfamily.

The enzyme catalyses malonyl-[ACP] + S-adenosyl-L-methionine = malonyl-[ACP] methyl ester + S-adenosyl-L-homocysteine. Its pathway is cofactor biosynthesis; biotin biosynthesis. In terms of biological role, converts the free carboxyl group of a malonyl-thioester to its methyl ester by transfer of a methyl group from S-adenosyl-L-methionine (SAM). It allows to synthesize pimeloyl-ACP via the fatty acid synthetic pathway. In Acetivibrio thermocellus (strain ATCC 27405 / DSM 1237 / JCM 9322 / NBRC 103400 / NCIMB 10682 / NRRL B-4536 / VPI 7372) (Clostridium thermocellum), this protein is Malonyl-[acyl-carrier protein] O-methyltransferase.